The sequence spans 246 residues: DNA repair protein RecO (246 aa).

The protein belongs to the RecO family.

Involved in DNA repair and RecF pathway recombination. This Methylorubrum extorquens (strain PA1) (Methylobacterium extorquens) protein is DNA repair protein RecO.